The sequence spans 451 residues: Bifunctional protein GlmU (451 aa).

The pyrophosphorylase stretch occupies residues 1–231 (MDSPLAIIVL…ADEVAGINSR (231 aa)). UDP-N-acetyl-alpha-D-glucosamine-binding positions include 10–13 (LAAG), Lys24, Gln74, 79–80 (GT), 102–104 (YGD), Gly142, Glu156, Asn171, and Asn229. Asp104 is a Mg(2+) binding site. Asn229 provides a ligand contact to Mg(2+). The linker stretch occupies residues 232 to 252 (GELAEAEGRWQQRRRAAAMAD). The segment at 253 to 451 (GASLIAPETV…MKKKKAEKKS (199 aa)) is N-acetyltransferase. Residues Arg318 and Lys336 each coordinate UDP-N-acetyl-alpha-D-glucosamine. His348 serves as the catalytic Proton acceptor. The UDP-N-acetyl-alpha-D-glucosamine site is built by Tyr351 and Asn362. Acetyl-CoA-binding positions include Ala365, 371–372 (NY), Ser390, Ala408, and Arg425.

The protein in the N-terminal section; belongs to the N-acetylglucosamine-1-phosphate uridyltransferase family. In the C-terminal section; belongs to the transferase hexapeptide repeat family. Homotrimer. It depends on Mg(2+) as a cofactor.

The protein localises to the cytoplasm. It catalyses the reaction alpha-D-glucosamine 1-phosphate + acetyl-CoA = N-acetyl-alpha-D-glucosamine 1-phosphate + CoA + H(+). The enzyme catalyses N-acetyl-alpha-D-glucosamine 1-phosphate + UTP + H(+) = UDP-N-acetyl-alpha-D-glucosamine + diphosphate. It functions in the pathway nucleotide-sugar biosynthesis; UDP-N-acetyl-alpha-D-glucosamine biosynthesis; N-acetyl-alpha-D-glucosamine 1-phosphate from alpha-D-glucosamine 6-phosphate (route II): step 2/2. It participates in nucleotide-sugar biosynthesis; UDP-N-acetyl-alpha-D-glucosamine biosynthesis; UDP-N-acetyl-alpha-D-glucosamine from N-acetyl-alpha-D-glucosamine 1-phosphate: step 1/1. Its pathway is bacterial outer membrane biogenesis; LPS lipid A biosynthesis. Functionally, catalyzes the last two sequential reactions in the de novo biosynthetic pathway for UDP-N-acetylglucosamine (UDP-GlcNAc). The C-terminal domain catalyzes the transfer of acetyl group from acetyl coenzyme A to glucosamine-1-phosphate (GlcN-1-P) to produce N-acetylglucosamine-1-phosphate (GlcNAc-1-P), which is converted into UDP-GlcNAc by the transfer of uridine 5-monophosphate (from uridine 5-triphosphate), a reaction catalyzed by the N-terminal domain. This Novosphingobium aromaticivorans (strain ATCC 700278 / DSM 12444 / CCUG 56034 / CIP 105152 / NBRC 16084 / F199) protein is Bifunctional protein GlmU.